The primary structure comprises 710 residues: Prolyl endopeptidase (710 aa).

Met1 carries the post-translational modification N-acetylmethionine. At Lys157 the chain carries N6-acetyllysine. Active-site charge relay system residues include Ser554, Asp641, and His680.

Belongs to the peptidase S9A family. In terms of tissue distribution, expressed in all tissues tested: uterus, kidney, heart, lung, small intestine, smooth muscle, liver, spleen, thymus, adrenal, pituitary and whole brain.

The protein resides in the cytoplasm. It catalyses the reaction Hydrolysis of Pro-|-Xaa &gt;&gt; Ala-|-Xaa in oligopeptides.. Inhibited by DFP, Z-Pro-prolinal and poststatin, but not by PMSF, SBTI, EDTA, leupeptin, E-64 and pepstatin. In terms of biological role, cleaves peptide bonds on the C-terminal side of prolyl residues within peptides that are up to approximately 30 amino acids long. Has high activity on the succinyl- (suc-) peptide-4-methylcoumaryl-7-amide (MCA) substrates suc-Gly-Pro-Leu-Gly-Pro-MCA, suc-Gly-Pro-MCA and suc-Ala-Ala-Ala-MCA. In Rattus norvegicus (Rat), this protein is Prolyl endopeptidase.